The primary structure comprises 627 residues: 1-deoxy-D-xylulose-5-phosphate synthase (627 aa).

Thiamine diphosphate-binding positions include histidine 72 and glycine 113–serine 115. Aspartate 144 lines the Mg(2+) pocket. Thiamine diphosphate contacts are provided by residues glycine 145–alanine 146, asparagine 173, tyrosine 283, and glutamate 366. Position 173 (asparagine 173) interacts with Mg(2+).

This sequence belongs to the transketolase family. DXPS subfamily. Homodimer. Requires Mg(2+) as cofactor. Thiamine diphosphate is required as a cofactor.

The enzyme catalyses D-glyceraldehyde 3-phosphate + pyruvate + H(+) = 1-deoxy-D-xylulose 5-phosphate + CO2. Its pathway is metabolic intermediate biosynthesis; 1-deoxy-D-xylulose 5-phosphate biosynthesis; 1-deoxy-D-xylulose 5-phosphate from D-glyceraldehyde 3-phosphate and pyruvate: step 1/1. Its function is as follows. Catalyzes the acyloin condensation reaction between C atoms 2 and 3 of pyruvate and glyceraldehyde 3-phosphate to yield 1-deoxy-D-xylulose-5-phosphate (DXP). This is 1-deoxy-D-xylulose-5-phosphate synthase from Macrococcus caseolyticus (strain JCSC5402) (Macrococcoides caseolyticum).